An 89-amino-acid chain; its full sequence is UPF0250 protein Bphyt_0500 (89 aa).

The protein belongs to the UPF0250 family.

This chain is UPF0250 protein Bphyt_0500, found in Paraburkholderia phytofirmans (strain DSM 17436 / LMG 22146 / PsJN) (Burkholderia phytofirmans).